The chain runs to 151 residues: Small ribosomal subunit protein uS15 (151 aa).

It belongs to the universal ribosomal protein uS15 family.

This chain is Small ribosomal subunit protein uS15 (RPS13), found in Wuchereria bancrofti.